We begin with the raw amino-acid sequence, 867 residues long: Protein translocase subunit SecA (867 aa).

ATP is bound by residues Gln-85, 103–107 (GEGKT), and Asp-491.

Belongs to the SecA family. Monomer and homodimer. Part of the essential Sec protein translocation apparatus which comprises SecA, SecYEG and auxiliary proteins SecDF. Other proteins may also be involved.

Its subcellular location is the cell membrane. The protein localises to the cytoplasm. It carries out the reaction ATP + H2O + cellular proteinSide 1 = ADP + phosphate + cellular proteinSide 2.. Functionally, part of the Sec protein translocase complex. Interacts with the SecYEG preprotein conducting channel. Has a central role in coupling the hydrolysis of ATP to the transfer of proteins into and across the cell membrane, serving as an ATP-driven molecular motor driving the stepwise translocation of polypeptide chains across the membrane. The protein is Protein translocase subunit SecA of Mycoplasmopsis pulmonis (strain UAB CTIP) (Mycoplasma pulmonis).